The following is a 311-amino-acid chain: Putative F-box protein At1g31090 (311 aa).

The region spanning 4-53 (GANSDSIPTDLIYEILSRLSVKPITRFRCVSKLWESIICRQDFTELFHNR) is the F-box domain. The tract at residues 287-311 (RPAEQNTSTSSREDHLVRTVKRKRA) is disordered.

The chain is Putative F-box protein At1g31090 from Arabidopsis thaliana (Mouse-ear cress).